The primary structure comprises 166 residues: 3-isopropylmalate dehydratase small subunit (166 aa).

This sequence belongs to the LeuD family. LeuD type 2 subfamily. Heterodimer of LeuC and LeuD.

It carries out the reaction (2R,3S)-3-isopropylmalate = (2S)-2-isopropylmalate. It functions in the pathway amino-acid biosynthesis; L-leucine biosynthesis; L-leucine from 3-methyl-2-oxobutanoate: step 2/4. Catalyzes the isomerization between 2-isopropylmalate and 3-isopropylmalate, via the formation of 2-isopropylmaleate. The protein is 3-isopropylmalate dehydratase small subunit of Moorella thermoacetica (strain ATCC 39073 / JCM 9320).